A 37-amino-acid chain; its full sequence is Large ribosomal subunit protein bL36 (37 aa).

This sequence belongs to the bacterial ribosomal protein bL36 family.

The protein is Large ribosomal subunit protein bL36 of Beutenbergia cavernae (strain ATCC BAA-8 / DSM 12333 / CCUG 43141 / JCM 11478 / NBRC 16432 / NCIMB 13614 / HKI 0122).